The chain runs to 132 residues: uncharacterized protein (132 aa).

This is an uncharacterized protein from Sinorhizobium fredii (strain NBRC 101917 / NGR234).